Reading from the N-terminus, the 181-residue chain is Ribulose bisphosphate carboxylase small subunit, chloroplastic 1 (181 aa).

A chloroplast-targeting transit peptide spans 1–57; it reads MASSIVSSAAAATRSNVAQASMVAPFTGLKSAASFPVTKKNNNVDITSLASNGGRVR.

It belongs to the RuBisCO small chain family. (Microbial infection) Binds to tobamovirus movement protein; this interaction seems required for viral systemic movement. In terms of assembly, heterohexadecamer of 8 large and 8 small subunits.

It localises to the plastid. The protein resides in the chloroplast. Its subcellular location is the cell junction. It is found in the plasmodesma. Its function is as follows. RuBisCO catalyzes two reactions: the carboxylation of D-ribulose 1,5-bisphosphate, the primary event in carbon dioxide fixation, as well as the oxidative fragmentation of the pentose substrate. Both reactions occur simultaneously and in competition at the same active site. Although the small subunit is not catalytic it is essential for maximal activity. Involved in antiviral defenses. The sequence is that of Ribulose bisphosphate carboxylase small subunit, chloroplastic 1 from Solanum lycopersicum (Tomato).